Here is a 355-residue protein sequence, read N- to C-terminus: Guanine nucleotide-binding protein G(z) subunit alpha (355 aa).

Residues 1–14 (MGCRQSSEEKEAAR) show a composition bias toward basic and acidic residues. Residues 1-26 (MGCRQSSEEKEAARRSRRIDRHLRSE) form a disordered region. The N-myristoyl glycine moiety is linked to residue Gly-2. The S-palmitoyl cysteine moiety is linked to residue Cys-3. In terms of domain architecture, G-alpha spans 32 to 355 (REIKLLLLGT…QNNLKYIGLC (324 aa)). The G1 motif stretch occupies residues 35–48 (KLLLLGTSNSGKST). Residues 40 to 47 (GTSNSGKS), 176 to 182 (LRSRDMT), 201 to 205 (DVGGQ), 270 to 273 (NKKD), and Ala-327 contribute to the GTP site. Ser-47 and Thr-182 together coordinate Mg(2+). The G2 motif stretch occupies residues 174-182 (DILRSRDMT). The G3 motif stretch occupies residues 197–206 (FKMVDVGGQR). The G4 motif stretch occupies residues 266 to 273 (ILFLNKKD). Positions 325-330 (TCATDT) are G5 motif.

It belongs to the G-alpha family. G(i/o/t/z) subfamily. G-proteins are composed of 3 units; alpha, beta and gamma. The alpha chain contains the guanine nucleotide binding site. Interacts with ADGRB2.

It is found in the membrane. Guanine nucleotide-binding proteins (G proteins) are involved as modulators or transducers in various transmembrane signaling systems. In Rattus norvegicus (Rat), this protein is Guanine nucleotide-binding protein G(z) subunit alpha (Gnaz).